We begin with the raw amino-acid sequence, 213 residues long: MNLLIMGLPGAGKGTQAAKIVETFELIHISTGDMFRAAMANQTEMGVLAKSYIDKGDLVPDEVTNGIVKERLAQADIKEKGFLLDGYPRTIEQAHALDETLEALGLTLDGVINIEVDPASLIDRLSGRIINKKTGETFHKIFNPPVGDYKEEDFYQREDDKPETVKRRLDVNIAQGEPIIKHYRQAGIVRDIDGNKDISEVFADIKKVIENLK.

ATP is bound at residue 10–15 (GAGKGT). Residues 30–59 (STGDMFRAAMANQTEMGVLAKSYIDKGDLV) form an NMP region. Residues Thr31, Arg36, 57 to 59 (DLV), 86 to 89 (GYPR), and Gln93 each bind AMP. The LID stretch occupies residues 127–160 (GRIINKKTGETFHKIFNPPVGDYKEEDFYQREDD). Residues Arg128 and 137–138 (TF) each bind ATP. AMP-binding residues include Arg157 and Arg168. Position 196 (Lys196) interacts with ATP.

Belongs to the adenylate kinase family. Monomer.

The protein localises to the cytoplasm. It catalyses the reaction AMP + ATP = 2 ADP. It functions in the pathway purine metabolism; AMP biosynthesis via salvage pathway; AMP from ADP: step 1/1. In terms of biological role, catalyzes the reversible transfer of the terminal phosphate group between ATP and AMP. Plays an important role in cellular energy homeostasis and in adenine nucleotide metabolism. This chain is Adenylate kinase, found in Streptococcus equi subsp. zooepidemicus (strain H70).